We begin with the raw amino-acid sequence, 157 residues long: Small ribosomal subunit protein uS9 (157 aa).

The protein belongs to the universal ribosomal protein uS9 family.

The sequence is that of Small ribosomal subunit protein uS9 from Caulobacter vibrioides (strain ATCC 19089 / CIP 103742 / CB 15) (Caulobacter crescentus).